Consider the following 881-residue polypeptide: DNA mismatch repair protein MutS (881 aa).

ATP is bound at residue 627–634 (GPNMGGKS).

It belongs to the DNA mismatch repair MutS family.

Functionally, this protein is involved in the repair of mismatches in DNA. It is possible that it carries out the mismatch recognition step. This protein has a weak ATPase activity. This chain is DNA mismatch repair protein MutS, found in Acinetobacter baumannii (strain AB307-0294).